A 1037-amino-acid polypeptide reads, in one-letter code: Guanine nucleotide-binding protein G(s) subunit alpha isoforms XLas (1037 aa).

4 disordered regions span residues 1–105 (MGVR…MPFE), 185–224 (APGG…EETM), 283–588 (SPSQ…TSGC), and 640–666 (PLAE…KKRS). The span at 33–46 (APGAAAPGAGPSPA) shows a compositional bias: low complexity. Residues 343–354 (PDKRERAERPPV) are compositionally biased toward basic and acidic residues. Composition is skewed to low complexity over residues 361–408 (MEGA…GATP) and 416–521 (APAD…PASG). Positions 553-565 (GKSESSRGRRVYY) are enriched in basic and acidic residues. Residues 572-583 (SDDDSSGDESDD) are compositionally biased toward acidic residues. Residues 640-660 (PLAEKRRQMRKEALEKRAQKR) are compositionally biased toward basic and acidic residues. Positions 641–667 (LAEKRRQMRKEALEKRAQKRAEKKRSK) form a coiled coil. One can recognise a G-alpha domain in the interval 682–1037 (CTHRLLLLGA…RMHLRQYELL (356 aa)). The segment at 685–698 (RLLLLGAGESGKST) is G1 motif. Residue 690–698 (GAGESGKST) participates in GTP binding. Residue S697 coordinates Mg(2+). Positions 711–734 (FNGEGGEEDPQAARSNSDGEKATK) are disordered. The stretch at 730-756 (EKATKVQDIKNNLKEAIETIVAAMSNL) forms a coiled coil. Positions 839-847 (DLLRCRVLT) are G2 motif. Residues 840–847 (LLRCRVLT), 866–870 (DVGGQ), and 935–938 (NKQD) each bind GTP. ADP-ribosylarginine; by cholera toxin is present on R844. Mg(2+) is bound at residue T847. A G3 motif region spans residues 862–871 (FHMFDVGGQR). The tract at residues 931-938 (ILFLNKQD) is G4 motif. The residue at position 995 (S995) is a Phosphoserine. Residues 1007-1012 (TCAVDT) form a G5 motif region. A1009 provides a ligand contact to GTP.

It belongs to the G-alpha family. G(s) subfamily. G proteins are composed of 3 units; alpha, beta and gamma. The alpha chain contains the guanine nucleotide binding site. Interacts through its N-terminal region with ALEX which is produced from the same locus in a different open reading frame. This interaction may inhibit its adenylyl cyclase-stimulating activity. Interacts with MAGED2.

Its subcellular location is the cell membrane. It localises to the apical cell membrane. It carries out the reaction GTP + H2O = GDP + phosphate + H(+). Its function is as follows. Guanine nucleotide-binding proteins (G proteins) function as transducers in numerous signaling pathways controlled by G protein-coupled receptors (GPCRs). The alpha chain contains the guanine nucleotide binding site and alternates between an active, GTP-bound state and an inactive, GDP-bound state. Signaling by an activated GPCR promotes GDP release and GTP binding. The alpha subunit has a low GTPase activity that converts bound GTP to GDP, thereby terminating the signal. Both GDP release and GTP hydrolysis are modulated by numerous regulatory proteins. Signaling involves the activation of adenylyl cyclases, resulting in increased levels of the signaling molecule cAMP. GNAS functions downstream of several GPCRs, including beta-adrenergic receptors. XLas isoforms interact with the same set of receptors as Gnas isoforms. In Homo sapiens (Human), this protein is Guanine nucleotide-binding protein G(s) subunit alpha isoforms XLas (GNAS).